The following is a 2068-amino-acid chain: MDFFIIIFILLLSFFFFDYNFCSRGLVFYIGNKSLKLLKKCNNLEKVYRSTIYLIFPFLQHIFVHIFYYYIEKKKEYLNNLIFEQSKEHYDIKGQKEFEACNFKKEDIFNYIIETSIKIKNYVYNKALHIFFFIVEYTNIYENINLNCHINTREVLNNNNFGVVIIDYYLPNTSIKKKKKKKKKDQTYNYINDSEKIDLYDLVNIKQEKKIKFVLIDNKWKHILGLGKIEDPNVQHLYLQDTVLIQYLQFSWIFKNHFFKKLYNDRDVSTHNYYEIKKNSMQQNDRDGVKEQYKKTCLGEEELIVDGNTCNNNHLNDHVNIKDEEYFNNKNYMNDQEEIIIRSLKKWNINKENVCSNKEENFNLITNNDKLMENTIYKNDNKDLYIETQKMKEDHVYNNSINLKKTKINEIEQNNLNTQNNNCYSNKEKYYINQEKKKQQLKYIKNENMIRDKLKMQLNRWKYKNIKGIIVILPEIFYNYINMNEMENKIPIYYFLKKDIKIDTFTVIAKLLGYICIHIHININFGFSIPFIFKSKTTNILNISNNFNLHMNKNLFNIYNENGTSNIKGTHTNISSDDKKLKCSKHISKQDIKNNINLCHKSVSNLNDHEKENKNKQDKMNIYSYINDHINIYNNDNNDNNSIHNNLYNKQNDNIKDTINYMDQNDKNNCHDMFLNNNYNEQSNEYHNHQQCVNNINDENRYQNYAHNNNNNNYNYIHTDYTNSKLNSIVENKFNMDDNYTFLFSTPFSFFSDNYNDLNIAMNHFKAIFKNYNFVFLCFNDGTNIMLNYFLEKIYKKKKNKTPGGMTTLISTAGVAENIKNTFNLYNTNAYKCHINNYKKKHVHDTKGDTYDNEKKKHSKLYPINKSEEDKKSKCTLHKANNKSNIMSLFFGEKKKKKYLEHEQMNQSQRFKKITKKWDIHKILSDIKGNDKSSFINQDKKINERKYNEIDKNDSDDSNASYDDEKILSHVVKEQMHSGEDEKEELGEPKEKGSKSCQEEEEQDEEEEDEDEEEEEDQGVNNYDNYVDGVDRDVENYDNYIDDVDRDVENYDKGIANVDHHLNDVHKDLDDHKKVEEVIADIEKEDKNVERKNVNLKGAQNKTEYQQELVKKLDTDQNINIDKKTMNQINNSEFSNNVENVQDKQKNKIKKEEMFTKNTKKNMKIKMKDNKNNDMGKLRNIKEKLKKKKMETLLNLSKLNIFHKNSEQISENYIKEEDNLYRNDYNTNESKIWSIYESHVSNDPRGSASTYKGNSSINKFANMSLSNFASFIKKHKNNNSNHSLVGSFKDNLEIKEIISKTNCEKNLNKYIDLNKENVMEIDMKEFVEPNIKHDVEKNVYKDINKNTNNEIVKTHNIVDEKNLNTQIQKYVNYDNEKNIKEDVERNVENNCERHEMKNSEIKKIKLNILEKFRKKEIRKCDNMDDAPRISNKFRYSFFKIRNRFKHNFNACDNKTNQEKKNMERDKMMINSFIKNKNAMVSDANSTSTADSNFDDYGKKHTKEICILINFSYNNMFDIFNYPDDFIETKKRKFSIVHKFFYSLNIFFNSFSTLIKQRYFFRCTSELSNFLKRSLFYDFYNNLLCKISTDDQDRNNFLLDINNSSNEYDVHLKRLSDITYICNSEKPDKYRDLLENKSNITSIYDDKKNVSRTNMSTYINKDMECTWHDNNQNKKSEKNFENIKNENIQEIDKIDLKYNNINNNNNNNNISENNNIRSNIGNEIYNNVSDMNKKNSSNNVNNPMEYNKDYTYNNSSIRDNDNNINVEIYKKNSLNTIEYFENNLSFFNKIHKMNKKKDEYKCDEKLYCKTKNIKSNNELYDVKNSYKLNNNNNNNNMIFNETYNNNTFFKNIYSDSFESKIRVYFNIKSLYEKWKIYFEDKQIDISIQDKFLYNLSFIYNVYNYLILIYIYTYYNEESYLAFCNNQKFYQFIEKIHCYFNEKKNNHILYKNVRNSESFNTSIIPRFLNYHDYKLLKVFFFMLQNSSNKFISKNIHLFNFPVVFIFSSDSKNFNFNHFDIIKISKNNNIIYLLYKRGNEGLFLSGLKPYIWIYRVLFDFVESLFLSSFDN.

The next 2 membrane-spanning stretches (helical) occupy residues 3 to 23 (FFII…NFCS) and 51 to 71 (TIYL…YYYI). A compositionally biased stretch (basic and acidic residues) spans 975-998 (QMHSGEDEKEELGEPKEKGSKSCQ). The segment at 975–1030 (QMHSGEDEKEELGEPKEKGSKSCQEEEEQDEEEEDEDEEEEEDQGVNNYDNYVDGV) is disordered. A compositionally biased stretch (acidic residues) spans 999–1018 (EEEEQDEEEEDEDEEEEEDQ). Residues 1890 to 1910 (FLYNLSFIYNVYNYLILIYIY) form a helical membrane-spanning segment.

The protein localises to the membrane. This is an uncharacterized protein from Plasmodium falciparum (isolate 3D7).